The sequence spans 161 residues: Endoribonuclease YbeY (161 aa).

3 residues coordinate Zn(2+): His-121, His-125, and His-131.

It belongs to the endoribonuclease YbeY family. The cofactor is Zn(2+).

Its subcellular location is the cytoplasm. Functionally, single strand-specific metallo-endoribonuclease involved in late-stage 70S ribosome quality control and in maturation of the 3' terminus of the 16S rRNA. This Stenotrophomonas maltophilia (strain R551-3) protein is Endoribonuclease YbeY.